Reading from the N-terminus, the 421-residue chain is Leucine-rich repeat-containing protein 42 (421 aa).

LRR repeat units follow at residues 149–170 (VLCS…EEIK), 174–195 (ELTR…LEHL), 202–222 (SVTQ…RKMT), 234–255 (NLTL…GYLF), and 259–280 (KLNC…KDKL). A disordered region spans residues 374–406 (HEPLLSQESKKSKKRAFEESEQEQSSPQSAKQK). Phosphoserine is present on Ser399.

This sequence belongs to the LRRC42 family.

This is Leucine-rich repeat-containing protein 42 (Lrrc42) from Rattus norvegicus (Rat).